We begin with the raw amino-acid sequence, 955 residues long: Outer capsid protein VP2 (955 aa).

The protein belongs to the orbivirus VP2 family.

Its subcellular location is the virion. In terms of biological role, the VP2 protein is one of the two proteins (with VP5) which constitute the virus particle outer capsid. It is the major target of the host immunogenic response. Responsible for viral attachment to target host cell, probably by binding to sialic acid. This attachment induces virion internalization predominantly through clathrin-dependent endocytosis. The polypeptide is Outer capsid protein VP2 (Segment-2) (Antilocapra americana (Pronghorn)).